The following is a 381-amino-acid chain: O-phospho-L-seryl-tRNA:Cys-tRNA synthase (381 aa).

Pyridoxal 5'-phosphate-binding positions include 86 to 87 (AR), Asn-192, and 215 to 217 (SGH). At Lys-218 the chain carries N6-(pyridoxal phosphate)lysine.

This sequence belongs to the SepCysS family. Homodimer. Interacts with SepRS. Pyridoxal 5'-phosphate serves as cofactor.

The enzyme catalyses O-phospho-L-seryl-tRNA(Cys) + hydrogen sulfide + H(+) = L-cysteinyl-tRNA(Cys) + phosphate. Converts O-phospho-L-seryl-tRNA(Cys) (Sep-tRNA(Cys)) to L-cysteinyl-tRNA(Cys) (Cys-tRNA(Cys)). This chain is O-phospho-L-seryl-tRNA:Cys-tRNA synthase, found in Methanococcus vannielii (strain ATCC 35089 / DSM 1224 / JCM 13029 / OCM 148 / SB).